The primary structure comprises 492 residues: Regulatory protein ViaA (492 aa).

This sequence belongs to the ViaA family. In terms of assembly, homodimer. Interacts with RavA.

The protein localises to the cytoplasm. In terms of biological role, component of the RavA-ViaA chaperone complex, which may act on the membrane to optimize the function of some of the respiratory chains. ViaA stimulates the ATPase activity of RavA. This Pectobacterium carotovorum subsp. carotovorum (strain PC1) protein is Regulatory protein ViaA.